A 277-amino-acid chain; its full sequence is Small ribosomal subunit protein uS2 (277 aa).

Over residues 228–241 (YEERLQAETDKDAE) the composition is skewed to basic and acidic residues. Residues 228–277 (YEERLQAETDKDAESSTVQQEENPEADIPESIETKESVSAAADSDLDENE) form a disordered region.

This sequence belongs to the universal ribosomal protein uS2 family.

This is Small ribosomal subunit protein uS2 from Syntrophus aciditrophicus (strain SB).